We begin with the raw amino-acid sequence, 319 residues long: Acetyl-coenzyme A carboxylase carboxyl transferase subunit alpha (319 aa).

Positions 35–296 (NIDEEVHRLR…KAQLLADLAD (262 aa)) constitute a CoA carboxyltransferase C-terminal domain.

This sequence belongs to the AccA family. Acetyl-CoA carboxylase is a heterohexamer composed of biotin carboxyl carrier protein (AccB), biotin carboxylase (AccC) and two subunits each of ACCase subunit alpha (AccA) and ACCase subunit beta (AccD).

It is found in the cytoplasm. The enzyme catalyses N(6)-carboxybiotinyl-L-lysyl-[protein] + acetyl-CoA = N(6)-biotinyl-L-lysyl-[protein] + malonyl-CoA. The protein operates within lipid metabolism; malonyl-CoA biosynthesis; malonyl-CoA from acetyl-CoA: step 1/1. Component of the acetyl coenzyme A carboxylase (ACC) complex. First, biotin carboxylase catalyzes the carboxylation of biotin on its carrier protein (BCCP) and then the CO(2) group is transferred by the carboxyltransferase to acetyl-CoA to form malonyl-CoA. The polypeptide is Acetyl-coenzyme A carboxylase carboxyl transferase subunit alpha (Klebsiella pneumoniae (strain 342)).